A 424-amino-acid chain; its full sequence is Adenylyltransferase and sulfurtransferase UBA4 (424 aa).

ATP is bound by residues G76, D97, 104–108, K121, and 165–166; these read TNLHR and DS. Zn(2+)-binding residues include C206 and C209. The active-site Glycyl thioester intermediate; for adenylyltransferase activity is the C223. C283 contacts Zn(2+). The Rhodanese domain maps to 326–422; it reads RNSDHVLLDV…WYSEVDQNIP (97 aa). C382 acts as the Cysteine persulfide intermediate; for sulfurtransferase activity in catalysis.

This sequence in the N-terminal section; belongs to the HesA/MoeB/ThiF family. UBA4 subfamily. Requires Zn(2+) as cofactor.

It is found in the cytoplasm. The protein resides in the cytosol. The protein operates within tRNA modification; 5-methoxycarbonylmethyl-2-thiouridine-tRNA biosynthesis. Functionally, plays a central role in 2-thiolation of mcm(5)S(2)U at tRNA wobble positions of cytosolic tRNA(Lys), tRNA(Glu) and tRNA(Gln). Acts by mediating the C-terminal thiocarboxylation of sulfur carrier URM1. Its N-terminus first activates URM1 as acyl-adenylate (-COAMP), then the persulfide sulfur on the catalytic cysteine is transferred to URM1 to form thiocarboxylation (-COSH) of its C-terminus. The reaction probably involves hydrogen sulfide that is generated from the persulfide intermediate and that acts as a nucleophile towards URM1. Subsequently, a transient disulfide bond is formed. Does not use thiosulfate as sulfur donor; NFS1 probably acting as a sulfur donor for thiocarboxylation reactions. Prior mcm(5) tRNA modification by the elongator complex is required for 2-thiolation. May also be involved in protein urmylation. This chain is Adenylyltransferase and sulfurtransferase UBA4, found in Meyerozyma guilliermondii (strain ATCC 6260 / CBS 566 / DSM 6381 / JCM 1539 / NBRC 10279 / NRRL Y-324) (Yeast).